A 119-amino-acid chain; its full sequence is Large ribosomal subunit protein uL14 (119 aa).

Belongs to the universal ribosomal protein uL14 family. In terms of assembly, part of the 50S ribosomal subunit. Forms a cluster with proteins L3 and L19. In the 70S ribosome, L14 and L19 interact and together make contacts with the 16S rRNA in bridges B5 and B8.

Its function is as follows. Binds to 23S rRNA. Forms part of two intersubunit bridges in the 70S ribosome. In Anaplasma phagocytophilum (strain HZ), this protein is Large ribosomal subunit protein uL14.